Here is a 240-residue protein sequence, read N- to C-terminus: 4-hydroxy-tetrahydrodipicolinate reductase (240 aa).

Residues 79–81 (ATT) and 103–106 (SANM) each bind NAD(+). Catalysis depends on His-135, which acts as the Proton donor/acceptor. His-136 contacts (S)-2,3,4,5-tetrahydrodipicolinate. Lys-139 serves as the catalytic Proton donor. A (S)-2,3,4,5-tetrahydrodipicolinate-binding site is contributed by 145 to 146 (GT).

This sequence belongs to the DapB family.

The protein resides in the cytoplasm. It carries out the reaction (S)-2,3,4,5-tetrahydrodipicolinate + NAD(+) + H2O = (2S,4S)-4-hydroxy-2,3,4,5-tetrahydrodipicolinate + NADH + H(+). The enzyme catalyses (S)-2,3,4,5-tetrahydrodipicolinate + NADP(+) + H2O = (2S,4S)-4-hydroxy-2,3,4,5-tetrahydrodipicolinate + NADPH + H(+). The protein operates within amino-acid biosynthesis; L-lysine biosynthesis via DAP pathway; (S)-tetrahydrodipicolinate from L-aspartate: step 4/4. Its function is as follows. Catalyzes the conversion of 4-hydroxy-tetrahydrodipicolinate (HTPA) to tetrahydrodipicolinate. This is 4-hydroxy-tetrahydrodipicolinate reductase from Staphylococcus epidermidis (strain ATCC 12228 / FDA PCI 1200).